The primary structure comprises 299 residues: ATP phosphoribosyltransferase (299 aa).

It belongs to the ATP phosphoribosyltransferase family. Long subfamily. In terms of assembly, equilibrium between an active dimeric form, an inactive hexameric form and higher aggregates. Interconversion between the various forms is largely reversible and is influenced by the natural substrates and inhibitors of the enzyme. Requires Mg(2+) as cofactor.

The protein resides in the cytoplasm. It carries out the reaction 1-(5-phospho-beta-D-ribosyl)-ATP + diphosphate = 5-phospho-alpha-D-ribose 1-diphosphate + ATP. It functions in the pathway amino-acid biosynthesis; L-histidine biosynthesis; L-histidine from 5-phospho-alpha-D-ribose 1-diphosphate: step 1/9. With respect to regulation, feedback inhibited by histidine. Catalyzes the condensation of ATP and 5-phosphoribose 1-diphosphate to form N'-(5'-phosphoribosyl)-ATP (PR-ATP). Has a crucial role in the pathway because the rate of histidine biosynthesis seems to be controlled primarily by regulation of HisG enzymatic activity. This is ATP phosphoribosyltransferase from Enterobacter sp. (strain 638).